The primary structure comprises 174 residues: Myosin regulatory light chain sqh (174 aa).

Thr-21 bears the Phosphothreonine mark. At Ser-22 the chain carries Phosphoserine. EF-hand domains follow at residues 31 to 66 (AQIA…LGKN) and 100 to 135 (DPED…MGDR). The Ca(2+) site is built by Asp-44, Asn-46, Asp-48, and Asp-55.

As to quaternary structure, myosin is a hexamer of 2 heavy chains and 4 light chains. In terms of processing, phosphorylation plays a central role in myosin regulation.

In terms of biological role, required for cytokinesis, could regulate contractile ring function. The sequence is that of Myosin regulatory light chain sqh (sqh) from Drosophila melanogaster (Fruit fly).